The sequence spans 229 residues: 7-cyano-7-deazaguanine synthase (229 aa).

8 to 18 (FSGGQDSTTCL) lines the ATP pocket. Cysteine 187, cysteine 196, cysteine 199, and cysteine 202 together coordinate Zn(2+).

Belongs to the QueC family. Zn(2+) is required as a cofactor.

It catalyses the reaction 7-carboxy-7-deazaguanine + NH4(+) + ATP = 7-cyano-7-deazaguanine + ADP + phosphate + H2O + H(+). The protein operates within purine metabolism; 7-cyano-7-deazaguanine biosynthesis. Its function is as follows. Catalyzes the ATP-dependent conversion of 7-carboxy-7-deazaguanine (CDG) to 7-cyano-7-deazaguanine (preQ(0)). The polypeptide is 7-cyano-7-deazaguanine synthase (Shewanella halifaxensis (strain HAW-EB4)).